Consider the following 131-residue polypeptide: Protein NrdI (131 aa).

The protein belongs to the NrdI family.

Probably involved in ribonucleotide reductase function. The polypeptide is Protein NrdI (Bacillus licheniformis (strain ATCC 14580 / DSM 13 / JCM 2505 / CCUG 7422 / NBRC 12200 / NCIMB 9375 / NCTC 10341 / NRRL NRS-1264 / Gibson 46)).